Reading from the N-terminus, the 569-residue chain is Proline--tRNA ligase (569 aa).

Belongs to the class-II aminoacyl-tRNA synthetase family. ProS type 1 subfamily. Homodimer.

It localises to the cytoplasm. The enzyme catalyses tRNA(Pro) + L-proline + ATP = L-prolyl-tRNA(Pro) + AMP + diphosphate. Catalyzes the attachment of proline to tRNA(Pro) in a two-step reaction: proline is first activated by ATP to form Pro-AMP and then transferred to the acceptor end of tRNA(Pro). As ProRS can inadvertently accommodate and process non-cognate amino acids such as alanine and cysteine, to avoid such errors it has two additional distinct editing activities against alanine. One activity is designated as 'pretransfer' editing and involves the tRNA(Pro)-independent hydrolysis of activated Ala-AMP. The other activity is designated 'posttransfer' editing and involves deacylation of mischarged Ala-tRNA(Pro). The misacylated Cys-tRNA(Pro) is not edited by ProRS. The chain is Proline--tRNA ligase from Legionella pneumophila subsp. pneumophila (strain Philadelphia 1 / ATCC 33152 / DSM 7513).